A 68-amino-acid polypeptide reads, in one-letter code: Pleurocidin (68 aa).

Positions 1–22 (MKFTATFLMMAIFVLMVEPGEC) are cleaved as a signal peptide. Positions 48 to 68 (GDKQELNKRAVDEDPNVIVFE) are excised as a propeptide.

It belongs to the pleurocidin family. As to expression, goblet cells.

The protein resides in the secreted. Its subcellular location is the membrane. Functionally, antimicrobial peptide with potent activity against Gram-positive and Gram-negative bacteria. Activity against E.coli and B.subtilis. Weaker activity against L.mucor, s.marcescens and P.aeruginosa. May play a role in innate host defense. This Pseudopleuronectes americanus (Winter flounder) protein is Pleurocidin (ple1).